The sequence spans 212 residues: MSVDEKVARALKGTTTVGIRSEKAVVLAADKRATAGNFIVHKRVEKIVKISDYMAMTTAGLVADAQVLADVLRMEVKNYELFHKKRMSVKAAATFLSNVLHSARFYPYIVQLLVGGFDTAPRLYSLDWFGTVAEEEFLVTGSGSPMAVGVIEAEYNPNMDLEELVNLAVRAVFAATRRDTASGEGIDVAVIDRNGITMRHYRLGDVIRLVRP.

Positions 1–13 are cleaved as a propeptide — removed in mature form; by autocatalysis; it reads MSVDEKVARALKG. The active-site Nucleophile is Thr-14.

It belongs to the peptidase T1B family. As to quaternary structure, the 20S proteasome core is composed of 14 alpha and 14 beta subunits that assemble into four stacked heptameric rings, resulting in a barrel-shaped structure. The two inner rings, each composed of seven catalytic beta subunits, are sandwiched by two outer rings, each composed of seven alpha subunits. The catalytic chamber with the active sites is on the inside of the barrel. Has a gated structure, the ends of the cylinder being occluded by the N-termini of the alpha-subunits. Is capped at one or both ends by the proteasome regulatory ATPase, PAN.

It localises to the cytoplasm. The enzyme catalyses Cleavage of peptide bonds with very broad specificity.. With respect to regulation, the formation of the proteasomal ATPase PAN-20S proteasome complex, via the docking of the C-termini of PAN into the intersubunit pockets in the alpha-rings, triggers opening of the gate for substrate entry. Interconversion between the open-gate and close-gate conformations leads to a dynamic regulation of the 20S proteasome proteolysis activity. Its function is as follows. Component of the proteasome core, a large protease complex with broad specificity involved in protein degradation. This is Proteasome subunit beta 2 from Ignicoccus hospitalis (strain KIN4/I / DSM 18386 / JCM 14125).